Reading from the N-terminus, the 155-residue chain is Small ribosomal subunit protein uS7cz/uS7cy (155 aa).

Belongs to the universal ribosomal protein uS7 family. As to quaternary structure, part of the 30S ribosomal subunit.

Its subcellular location is the plastid. The protein resides in the chloroplast. Functionally, one of the primary rRNA binding proteins, it binds directly to 16S rRNA where it nucleates assembly of the head domain of the 30S subunit. The sequence is that of Small ribosomal subunit protein uS7cz/uS7cy (rps7-A) from Atropa belladonna (Belladonna).